Consider the following 545-residue polypeptide: Probable bifunctional tRNA threonylcarbamoyladenosine biosynthesis protein (545 aa).

Residues 1–329 (MDTSKDLICI…YRSDMVEVNW (329 aa)) form a kae1 region. Fe cation-binding residues include H112, H116, and Y133. L-threonylcarbamoyladenylate is bound by residues 133–137 (YVSGG), D165, G178, E182, and N262. Fe cation is bound at residue D290. Positions 344–545 (IIPEHLIGKG…KEVEKRARYL (202 aa)) constitute a Protein kinase domain. ATP-binding positions include 350 to 358 (IGKGAEADI) and K371. D463 serves as the catalytic Proton acceptor; for kinase activity.

The protein in the N-terminal section; belongs to the KAE1 / TsaD family. It in the C-terminal section; belongs to the protein kinase superfamily. Tyr protein kinase family. BUD32 subfamily. As to quaternary structure, component of the KEOPS complex that consists of Kae1, Bud32, Cgi121 and Pcc1; the whole complex dimerizes. Fe(2+) serves as cofactor.

Its subcellular location is the cytoplasm. It carries out the reaction L-seryl-[protein] + ATP = O-phospho-L-seryl-[protein] + ADP + H(+). The enzyme catalyses L-threonyl-[protein] + ATP = O-phospho-L-threonyl-[protein] + ADP + H(+). It catalyses the reaction L-threonylcarbamoyladenylate + adenosine(37) in tRNA = N(6)-L-threonylcarbamoyladenosine(37) in tRNA + AMP + H(+). In terms of biological role, required for the formation of a threonylcarbamoyl group on adenosine at position 37 (t(6)A37) in tRNAs that read codons beginning with adenine. Is a component of the KEOPS complex that is probably involved in the transfer of the threonylcarbamoyl moiety of threonylcarbamoyl-AMP (TC-AMP) to the N6 group of A37. The Kae1 domain likely plays a direct catalytic role in this reaction. The Bud32 domain probably displays kinase activity that regulates Kae1 function. The sequence is that of Probable bifunctional tRNA threonylcarbamoyladenosine biosynthesis protein from Methanococcus maripaludis (strain C5 / ATCC BAA-1333).